A 195-amino-acid polypeptide reads, in one-letter code: CASP-like protein 1B2 (195 aa).

Topologically, residues 1–25 (MDLEKGKKPSEQAAACRIMQVKDKL) are cytoplasmic. A helical membrane pass occupies residues 26-46 (ITLQPVVRACVFLATAVAAVI). Over 47 to 78 (MGLNKQSYTTVVAIVGTRPVTQTFTAKFKDTP) the chain is Extracellular. A helical membrane pass occupies residues 79-99 (AFVFFVIANAIASGYNLMVLV). Residues 100–114 (TRRILQRRAQSLSVH) lie on the Cytoplasmic side of the membrane. The chain crosses the membrane as a helical span at residues 115 to 135 (LLDMVILTLLATGSATAASMA). At 136 to 160 (QLGKNGNLHARWNPICDKFGSFCNH) the chain is on the extracellular side. The helical transmembrane segment at 161–181 (GGIALVSSFIGVALMLALNLL) threads the bilayer. At 182-195 (SAAANSPRSNVTGQ) the chain is on the cytoplasmic side.

It belongs to the Casparian strip membrane proteins (CASP) family. In terms of assembly, homodimer and heterodimers.

Its subcellular location is the cell membrane. This is CASP-like protein 1B2 from Oryza sativa subsp. indica (Rice).